Reading from the N-terminus, the 204-residue chain is Urease accessory protein UreG (204 aa).

Residue 12 to 19 (GPVGSGKT) participates in GTP binding.

Belongs to the SIMIBI class G3E GTPase family. UreG subfamily. In terms of assembly, homodimer. UreD, UreF and UreG form a complex that acts as a GTP-hydrolysis-dependent molecular chaperone, activating the urease apoprotein by helping to assemble the nickel containing metallocenter of UreC. The UreE protein probably delivers the nickel.

The protein localises to the cytoplasm. Its function is as follows. Facilitates the functional incorporation of the urease nickel metallocenter. This process requires GTP hydrolysis, probably effectuated by UreG. This is Urease accessory protein UreG from Ectopseudomonas mendocina (strain ymp) (Pseudomonas mendocina).